The sequence spans 120 residues: MFLLYEYDIFWAFLIISSLIPILVFFISGFLAPISKGPEKLSSYESGIEPIGDAWLQFRIRYYMFALVFVVFDVETVFLYPWAMSFDVLGVSVFVEALIFVLILIVGLVYAWRKGALEWS.

A run of 3 helical transmembrane segments spans residues 9 to 29 (IFWAFLIISSLIPILVFFISG), 64 to 84 (MFALVFVVFDVETVFLYPWAM), and 88 to 108 (VLGVSVFVEALIFVLILIVGL).

It belongs to the complex I subunit 3 family. As to quaternary structure, NDH is composed of at least 16 different subunits, 5 of which are encoded in the nucleus.

The protein localises to the plastid. It localises to the chloroplast thylakoid membrane. It catalyses the reaction a plastoquinone + NADH + (n+1) H(+)(in) = a plastoquinol + NAD(+) + n H(+)(out). The enzyme catalyses a plastoquinone + NADPH + (n+1) H(+)(in) = a plastoquinol + NADP(+) + n H(+)(out). Its function is as follows. NDH shuttles electrons from NAD(P)H:plastoquinone, via FMN and iron-sulfur (Fe-S) centers, to quinones in the photosynthetic chain and possibly in a chloroplast respiratory chain. The immediate electron acceptor for the enzyme in this species is believed to be plastoquinone. Couples the redox reaction to proton translocation, and thus conserves the redox energy in a proton gradient. This chain is NAD(P)H-quinone oxidoreductase subunit 3, chloroplastic, found in Lactuca sativa (Garden lettuce).